We begin with the raw amino-acid sequence, 72 residues long: DNA-directed RNA polymerase subunit omega (72 aa).

Belongs to the RNA polymerase subunit omega family. The RNAP catalytic core consists of 2 alpha, 1 beta, 1 beta' and 1 omega subunit. When a sigma factor is associated with the core the holoenzyme is formed, which can initiate transcription.

The enzyme catalyses RNA(n) + a ribonucleoside 5'-triphosphate = RNA(n+1) + diphosphate. Its function is as follows. Promotes RNA polymerase assembly. Latches the N- and C-terminal regions of the beta' subunit thereby facilitating its interaction with the beta and alpha subunits. The chain is DNA-directed RNA polymerase subunit omega from Francisella tularensis subsp. tularensis (strain FSC 198).